The chain runs to 679 residues: Methionine--tRNA ligase (679 aa).

Positions 14 to 24 (PYANGSIHLGH) match the 'HIGH' region motif. Zn(2+) is bound by residues C145, C148, C158, and C161. The 'KMSKS' region motif lies at 331-335 (KMSKS). Position 334 (K334) interacts with ATP. The region spanning 577–679 (TFAAVDLRIA…NGAKPGQRVM (103 aa)) is the tRNA-binding domain.

The protein belongs to the class-I aminoacyl-tRNA synthetase family. MetG type 1 subfamily. As to quaternary structure, homodimer. It depends on Zn(2+) as a cofactor.

The protein resides in the cytoplasm. It catalyses the reaction tRNA(Met) + L-methionine + ATP = L-methionyl-tRNA(Met) + AMP + diphosphate. Its function is as follows. Is required not only for elongation of protein synthesis but also for the initiation of all mRNA translation through initiator tRNA(fMet) aminoacylation. The protein is Methionine--tRNA ligase of Stutzerimonas stutzeri (strain A1501) (Pseudomonas stutzeri).